A 189-amino-acid chain; its full sequence is Xanthine phosphoribosyltransferase (189 aa).

Xanthine is bound by residues L20 and N27. Residue 128–132 (ANGQA) participates in 5-phospho-alpha-D-ribose 1-diphosphate binding. K156 contributes to the xanthine binding site.

This sequence belongs to the purine/pyrimidine phosphoribosyltransferase family. Xpt subfamily. Homodimer.

It is found in the cytoplasm. The catalysed reaction is XMP + diphosphate = xanthine + 5-phospho-alpha-D-ribose 1-diphosphate. The protein operates within purine metabolism; XMP biosynthesis via salvage pathway; XMP from xanthine: step 1/1. Its function is as follows. Converts the preformed base xanthine, a product of nucleic acid breakdown, to xanthosine 5'-monophosphate (XMP), so it can be reused for RNA or DNA synthesis. This Leuconostoc mesenteroides subsp. mesenteroides (strain ATCC 8293 / DSM 20343 / BCRC 11652 / CCM 1803 / JCM 6124 / NCDO 523 / NBRC 100496 / NCIMB 8023 / NCTC 12954 / NRRL B-1118 / 37Y) protein is Xanthine phosphoribosyltransferase.